A 377-amino-acid chain; its full sequence is Diels-Alderase fsa2 (377 aa).

Belongs to the Diels-Alderase family.

The catalysed reaction is (5S)-3-[(2E,6R,8E,10E,12E)-2,6-dimethyltetradeca-2,8,10,12-tetraenoyl]-5-(hydroxymethyl)pyrrolidine-2,4-dione = trichosetin. It participates in mycotoxin biosynthesis. In terms of biological role, diels-Alderase; part of the gene cluster that mediates the biosynthesis of equisetin, a trans-fused decalin-containing tetramic acid with antimicrobial activity. The PKS module of eqxS together with the enoylreductase eqxC catalyze the formation of the polyketide unit which is then conjugated to L-serine by the condensation domain of the eqxS NRPS module. Activity of the Dieckmann cyclase domain (RED) results in release of the Dieckmann product intermediate. Diels-Alderase eqx3 is involved in endo-selective Diels-Alder cycloaddition to form the decalin ring, leading to the production of N-desmethylequisetin also called trichosetin. Subsequent N-methylation is carried out by eqxD to give equisetin. The sequence is that of Diels-Alderase fsa2 from Fusarium heterosporum.